Reading from the N-terminus, the 201-residue chain is Glutathione S-transferase (201 aa).

Positions 1–81 (MKLYYKVGAC…YIGDHSDVAA (81 aa)) constitute a GST N-terminal domain. Glutathione is bound by residues cysteine 10, lysine 35, valine 52, 65–66 (QN), and 102–105 (SDLH). Residues 87 to 201 (GSIERARLQE…QKAFKEEGLN (115 aa)) form the GST C-terminal domain.

It belongs to the GST superfamily. Beta family. In terms of assembly, homodimer.

Its subcellular location is the cytoplasm. It carries out the reaction RX + glutathione = an S-substituted glutathione + a halide anion + H(+). In terms of biological role, conjugation of reduced glutathione to a wide number of exogenous and endogenous hydrophobic electrophiles. The protein is Glutathione S-transferase (gst) of Brucella anthropi (Ochrobactrum anthropi).